The following is a 303-amino-acid chain: Glycine--tRNA ligase alpha subunit (303 aa).

It belongs to the class-II aminoacyl-tRNA synthetase family. In terms of assembly, tetramer of two alpha and two beta subunits.

Its subcellular location is the cytoplasm. The enzyme catalyses tRNA(Gly) + glycine + ATP = glycyl-tRNA(Gly) + AMP + diphosphate. The sequence is that of Glycine--tRNA ligase alpha subunit from Enterobacter sp. (strain 638).